The following is a 133-amino-acid chain: NADPH-dependent 7-cyano-7-deazaguanine reductase (133 aa).

The Thioimide intermediate role is filled by cysteine 49. Aspartate 56 functions as the Proton donor in the catalytic mechanism. Substrate-binding positions include 71-73 and 90-91; these read IEL and HE.

The protein belongs to the GTP cyclohydrolase I family. QueF type 1 subfamily.

It is found in the cytoplasm. It carries out the reaction 7-aminomethyl-7-carbaguanine + 2 NADP(+) = 7-cyano-7-deazaguanine + 2 NADPH + 3 H(+). Its pathway is tRNA modification; tRNA-queuosine biosynthesis. Functionally, catalyzes the NADPH-dependent reduction of 7-cyano-7-deazaguanine (preQ0) to 7-aminomethyl-7-deazaguanine (preQ1). The sequence is that of NADPH-dependent 7-cyano-7-deazaguanine reductase from Leptospira borgpetersenii serovar Hardjo-bovis (strain JB197).